A 490-amino-acid chain; its full sequence is Pre-glycoprotein polyprotein GP complex (490 aa).

G2 is lipidated: N-myristoyl glycine; by host. The Extracellular portion of the chain corresponds to 2–17; that stretch reads GQIVTFFQEVPHVIEE. The chain crosses the membrane as a helical span at residues 18-33; sequence VMNIVLIALSILAILK. Topologically, residues 34–58 are cytoplasmic; the sequence is GLYNVATCGLIGLVTFLLLSGRSCS. C57 serves as a coordination point for Zn(2+). The Extracellular portion of the chain corresponds to 59–431; that stretch reads LIYKGTYELQ…QGKTPLGLVD (373 aa). Residues N78, N88, N98, N108, N118, and N166 are each glycosylated (N-linked (GlcNAc...) asparagine; by host). 6 disulfides stabilise this stretch: C85–C230, C117–C154, C179–C211, C278–C291, C300–C309, and C363–C384. A glycan (N-linked (GlcNAc...) asparagine; by host) is linked at N223. N-linked (GlcNAc...) asparagine; by host glycans are attached at residues N364, N372, N389, and N394. Residues 432-452 traverse the membrane as a helical segment; it reads LFVFSTSFYLISIFLHLVKIP. Topologically, residues 453–490 are cytoplasmic; sequence THRHIVGKPCPKPHRLNHMGICSCGLYKQPGVPVRWKR. H454, H456, C462, H466, C474, and C476 together coordinate Zn(2+).

It belongs to the arenaviridae GPC protein family. In terms of assembly, interacts with glycoprotein G2. Part of the GP complex (GP-C) together with glycoprotein G1 and glycoprotein G2. The GP-complex interacts with protein Z, which interacts with ribonucleocapsid; these interactions may induce virion budding. As to quaternary structure, homotrimer; disulfide-linked. In pre-fusion state, G1 homotrimers bind G2 homotrimers via ionic interactions. Part of the GP complex (GP-C) together with glycoprotein G2 and the stable signal peptide. Interacts with the primary host receptor DAG1 on the cell surface; this interaction occurs at pH 8.0 but not at pH 6.0 and below. Upon virus internalization and at endosomal pH, interacts with the host lysosomal protein LAMP1; this interaction mediates G1 dissociation from GP-C and membrane fusion. The GP-complex interacts with protein Z, which interacts with ribonucleocapsid; these interactions may induce virion budding. Homotrimer. Interacts with the stable signal peptide. In pre-fusion state, G2 homotrimers bind G1 homotrimers via ionic interactions. Part of the GP complex (GP-C) together with glycoprotein G1 and the stable signal peptide. Acidification in the endosome triggers rearrangements, which ultimately leads to a 6 helix bundle formed by the two heptad repeat domains (HR1 and HR2) in post-fusion state. The GP-complex interacts with protein Z, which interacts with ribonucleocapsid; these interactions may induce virion budding. Post-translationally, specific enzymatic cleavages in vivo yield mature proteins. GP-C polyprotein is cleaved in the endoplasmic reticulum by the host protease MBTPS1. Only cleaved glycoprotein is incorporated into virions. The SSP remains stably associated with the GP complex following cleavage by signal peptidase and plays crucial roles in the trafficking of GP through the secretory pathway. In terms of processing, myristoylation is necessary for GP2-mediated fusion activity.

The protein localises to the virion membrane. Its subcellular location is the host endoplasmic reticulum membrane. The protein resides in the host Golgi apparatus membrane. It localises to the host cell membrane. Functions as a cleaved signal peptide that is retained as the third component of the GP complex (GP-C). Helps to stabilize the spike complex in its native conformation. The SSP is required for efficient glycoprotein expression, post-translational maturation cleavage of G1 and G2, glycoprotein transport to the cell surface plasma membrane, formation of infectious virus particles, and acid pH-dependent glycoprotein-mediated cell fusion. Its function is as follows. Forms the virion spikes together with glycoprotein G2. The glycoprotein spike trimers are connected to the underlying matrix. Interacts with the host receptor. Mediates virus attachment to the host primary receptor alpha-dystroglycan DAG1 (alpha-DG) at the cell surface. This attachment induces virion internalization apparently through macropinocytosis. Following endocytosis, there is a pH-dependent switch from binding DAG1 to the host lysosomal receptor LAMP1. This latter binding triggers the dissociation of GP1, exposing the fusion subunit, GP2, such that fusion can occur. Down-modulates host DAG1. Functionally, forms the virion spikes together with glycoprotein G1. The glycoprotein spike trimers are connected to the underlying matrix. Class I viral fusion protein that directs fusion of viral and host endosomal membranes, leading to delivery of the nucleocapsid into the cytoplasm. Membrane fusion is mediated by irreversible conformational changes induced by acidification. This chain is Pre-glycoprotein polyprotein GP complex, found in Lassa virus (strain GA391) (LASV).